The chain runs to 136 residues: Cystatin-2 (136 aa).

A signal peptide spans 1 to 24; sequence MALLRGFLVCSLLLLSCICKEALG. In terms of domain architecture, Cystatin spans 29-124; sequence GGLENASPEE…CTFEVYNIPW (96 aa). A Secondary area of contact motif is present at residues 73–77; it reads QIVSG. 2 disulfide bridges follow: C91/C101 and C115/C135.

This sequence belongs to the cystatin family. Expressed by the venom gland.

Its subcellular location is the secreted. Inhibits various C1 cysteine proteases including cathepsin L, papain and cathepsin B. This protein has no toxic activity and its function in the venom is unknown. It may play a role as housekeeping or regulatory protein. This is Cystatin-2 from Crotalus adamanteus (Eastern diamondback rattlesnake).